Reading from the N-terminus, the 418-residue chain is Outer membrane protein assembly factor BamB (418 aa).

The first 28 residues, 1–28 (MFHNTCGRKGRFARAMGMALAISVTLSG), serve as a signal peptide directing secretion. Cys29 is lipidated: N-palmitoyl cysteine. Cys29 is lipidated: S-diacylglycerol cysteine.

The protein belongs to the BamB family. As to quaternary structure, part of the Bam complex.

It localises to the cell outer membrane. In terms of biological role, part of the outer membrane protein assembly complex, which is involved in assembly and insertion of beta-barrel proteins into the outer membrane. The protein is Outer membrane protein assembly factor BamB of Alteromonas naphthalenivorans.